The primary structure comprises 329 residues: Intradiol ring-cleavage dioxygenase hqdA (329 aa).

Fe cation-binding residues include Y167, Y201, H225, and H227.

Belongs to the intradiol ring-cleavage dioxygenase family. As to quaternary structure, homodimer. Fe(3+) is required as a cofactor.

It catalyses the reaction catechol + O2 = cis,cis-muconate + 2 H(+). The catalysed reaction is benzene-1,2,4-triol + O2 = maleylacetate + 2 H(+). Functionally, intradiol ring-cleavage dioxygenase involved in an alternative pathway to the protocatechuic acid pathway since it is active on hydroxyquinol and catechol but not on protocatechuic acid. In Aspergillus niger (strain ATCC MYA-4892 / CBS 513.88 / FGSC A1513), this protein is Intradiol ring-cleavage dioxygenase hqdA.